We begin with the raw amino-acid sequence, 128 residues long: Global transcriptional regulator Spx 1 (128 aa).

Cysteine 10 and cysteine 13 are joined by a disulfide.

It belongs to the ArsC family. Spx subfamily. Interacts with the C-terminal domain of the alpha subunit of the RNAP.

The protein resides in the cytoplasm. Global transcriptional regulator that plays a key role in stress response and exerts either positive or negative regulation of genes. Acts by interacting with the C-terminal domain of the alpha subunit of the RNA polymerase (RNAP). This interaction can enhance binding of RNAP to the promoter region of target genes and stimulate their transcription, or block interaction of RNAP with activator. This Lactococcus lactis subsp. lactis (strain IL1403) (Streptococcus lactis) protein is Global transcriptional regulator Spx 1.